A 333-amino-acid polypeptide reads, in one-letter code: Transaldolase (333 aa).

Residue Lys135 is the Schiff-base intermediate with substrate of the active site.

The protein belongs to the transaldolase family. Type 1 subfamily. Homodimer.

It is found in the cytoplasm. The catalysed reaction is D-sedoheptulose 7-phosphate + D-glyceraldehyde 3-phosphate = D-erythrose 4-phosphate + beta-D-fructose 6-phosphate. It functions in the pathway carbohydrate degradation; pentose phosphate pathway; D-glyceraldehyde 3-phosphate and beta-D-fructose 6-phosphate from D-ribose 5-phosphate and D-xylulose 5-phosphate (non-oxidative stage): step 2/3. Functionally, transaldolase is important for the balance of metabolites in the pentose-phosphate pathway. This Prochlorococcus marinus (strain MIT 9312) protein is Transaldolase.